A 295-amino-acid chain; its full sequence is UDP-N-acetylenolpyruvoylglucosamine reductase (295 aa).

An FAD-binding PCMH-type domain is found at 26–189 (VGGRADVLFK…VEAEFKGVNS (164 aa)). Arg169 is a catalytic residue. Cys218 (proton donor) is an active-site residue. Residue Glu288 is part of the active site.

This sequence belongs to the MurB family. FAD serves as cofactor.

It is found in the cytoplasm. The catalysed reaction is UDP-N-acetyl-alpha-D-muramate + NADP(+) = UDP-N-acetyl-3-O-(1-carboxyvinyl)-alpha-D-glucosamine + NADPH + H(+). It participates in cell wall biogenesis; peptidoglycan biosynthesis. Cell wall formation. The protein is UDP-N-acetylenolpyruvoylglucosamine reductase of Wolbachia pipientis wMel.